Consider the following 465-residue polypeptide: Ran-binding protein 3-like (465 aa).

The region spanning 276–417 (SQPSRKCLLE…ALQSFNKQRD (142 aa)) is the RanBD1 domain.

Interacts with SMAD1, SMAD5 and SMAD8; the interaction (with SMAD at least) increases when SMAD1 is not phosphorylated and mediates SMAD1 nuclear export.

The protein localises to the nucleus. It localises to the cytoplasm. Functionally, nuclear export factor for BMP-specific SMAD1/5/8 that plays a critical role in terminating BMP signaling and regulating mesenchymal stem cell differentiation by blocking osteoblast differentiation to promote myogenic differention. Directly recognizes dephosphorylated SMAD1/5/8 and mediates their nuclear export in a Ran-dependent manner. This is Ran-binding protein 3-like (RANBP3L) from Homo sapiens (Human).